Consider the following 117-residue polypeptide: Small ribosomal subunit protein bS6 (117 aa).

The interval 97–117 (TEEPSAILTKKDDRRGRRERN) is disordered.

It belongs to the bacterial ribosomal protein bS6 family.

Functionally, binds together with bS18 to 16S ribosomal RNA. The chain is Small ribosomal subunit protein bS6 from Maricaulis maris (strain MCS10) (Caulobacter maris).